We begin with the raw amino-acid sequence, 260 residues long: Putative enoyl-CoA hydratase/isomerase YngF (260 aa).

It belongs to the enoyl-CoA hydratase/isomerase family.

In Bacillus subtilis (strain 168), this protein is Putative enoyl-CoA hydratase/isomerase YngF (yngF).